We begin with the raw amino-acid sequence, 359 residues long: Chorismate synthase (359 aa).

NADP(+) contacts are provided by Arg-48 and Arg-54. FMN is bound by residues 125–127 (RSS), 243–244 (NA), Gly-283, 298–302 (KPTSS), and Arg-324.

Belongs to the chorismate synthase family. In terms of assembly, homotetramer. Requires FMNH2 as cofactor.

The catalysed reaction is 5-O-(1-carboxyvinyl)-3-phosphoshikimate = chorismate + phosphate. The protein operates within metabolic intermediate biosynthesis; chorismate biosynthesis; chorismate from D-erythrose 4-phosphate and phosphoenolpyruvate: step 7/7. In terms of biological role, catalyzes the anti-1,4-elimination of the C-3 phosphate and the C-6 proR hydrogen from 5-enolpyruvylshikimate-3-phosphate (EPSP) to yield chorismate, which is the branch point compound that serves as the starting substrate for the three terminal pathways of aromatic amino acid biosynthesis. This reaction introduces a second double bond into the aromatic ring system. The protein is Chorismate synthase of Mannheimia succiniciproducens (strain KCTC 0769BP / MBEL55E).